Here is a 215-residue protein sequence, read N- to C-terminus: Probable transaldolase (215 aa).

Lys-83 serves as the catalytic Schiff-base intermediate with substrate.

This sequence belongs to the transaldolase family. Type 3B subfamily.

Its subcellular location is the cytoplasm. It carries out the reaction D-sedoheptulose 7-phosphate + D-glyceraldehyde 3-phosphate = D-erythrose 4-phosphate + beta-D-fructose 6-phosphate. It functions in the pathway carbohydrate degradation; pentose phosphate pathway; D-glyceraldehyde 3-phosphate and beta-D-fructose 6-phosphate from D-ribose 5-phosphate and D-xylulose 5-phosphate (non-oxidative stage): step 2/3. Its function is as follows. Transaldolase is important for the balance of metabolites in the pentose-phosphate pathway. The protein is Probable transaldolase of Methanococcus maripaludis (strain C5 / ATCC BAA-1333).